The following is a 393-amino-acid chain: Cytohesin-4 (393 aa).

The stretch at 13-56 (SGEAKELQQIKWHRKQLLEDIQKLKDEIADVFAQIDCFESTEES) forms a coiled coil. The region spanning 54 to 241 (EESRMAQKEK…RNLFDSIKSE (188 aa)) is the SEC7 domain. One can recognise a PH domain in the interval 259–375 (NPDREGWLLK…WIEAIRASIT (117 aa)). Residues 268–275 (KLGGRVKT), Arg279, Tyr290, and Arg300 contribute to the a 1,2-diacyl-sn-glycero-3-phospho-(1D-myo-inositol-3,4,5-trisphosphate) site. Residues 386–393 (RKKKIVGK) are C-terminal autoinhibitory region.

It is found in the cell membrane. Its function is as follows. Promotes guanine-nucleotide exchange on ARF1 and ARF5. Promotes the activation of ARF factors through replacement of GDP with GTP. In Mus musculus (Mouse), this protein is Cytohesin-4 (Cyth4).